Here is a 419-residue protein sequence, read N- to C-terminus: Protein translocase subunit SecY (419 aa).

Transmembrane regions (helical) follow at residues 19 to 39 (IMILIFARLGNYIPIPGITEV), 64 to 84 (VISILTLGLGPFFSASLAVQF), 113 to 133 (ILTVLFCIIESFFLSNSLRSF), 143 to 163 (FVVAAAVTTGSLVLVWLSEVI), 167 to 189 (GIGNGSSLLILIGNLSRFRFLIN), 202 to 222 (SNLYIIYIIITLVSMLIFSTL), 255 to 275 (FGQAGVVPIIFSSSILLFLTT), 299 to 319 (IFYFFTFLVLIIFFSFFYTLI), 359 to 379 (FVGSILLSALILIPSILAAAL), and 380 to 400 (GVHPLSISGITSLILSFSIIN).

The protein belongs to the SecY/SEC61-alpha family. As to quaternary structure, component of the plastid Sec protein translocase complex, which is composed of at least SecY and SecE.

It is found in the plastid. The protein resides in the chloroplast thylakoid membrane. In terms of biological role, the central subunit of the protein translocation channel SecYE. Consists of two halves formed by TMs 1-5 and 6-10. These two domains form a lateral gate at the front which open onto the bilayer between TMs 2 and 7, and are clamped together by SecE at the back. The channel is closed by both a pore ring composed of hydrophobic SecY resides and a short helix (helix 2A) on the extracellular side of the membrane which forms a plug. In Diacronema lutheri (Unicellular marine alga), this protein is Protein translocase subunit SecY.